Consider the following 83-residue polypeptide: Beta-defensin 119 (83 aa).

The signal sequence occupies residues 1–20 (MKFLFLFLAILLAMEPVVSG). 3 disulfides stabilise this stretch: Cys27–Cys54, Cys34–Cys48, and Cys38–Cys55.

This sequence belongs to the beta-defensin family.

It localises to the secreted. Functionally, has antibacterial activity. The polypeptide is Beta-defensin 119 (DEFB119) (Bos taurus (Bovine)).